A 74-amino-acid chain; its full sequence is UPF0435 protein BAA_0470 (74 aa).

It belongs to the UPF0435 family.

This chain is UPF0435 protein BAA_0470, found in Bacillus anthracis (strain A0248).